The following is a 270-amino-acid chain: Glutamate 5-kinase (270 aa).

Residue Lys-15 participates in ATP binding. 3 residues coordinate substrate: Ser-55, Asp-142, and Asn-158. ATP-binding positions include Ser-178 to Asp-179 and Thr-220 to Lys-226.

It belongs to the glutamate 5-kinase family.

It is found in the cytoplasm. It catalyses the reaction L-glutamate + ATP = L-glutamyl 5-phosphate + ADP. It participates in amino-acid biosynthesis; L-proline biosynthesis; L-glutamate 5-semialdehyde from L-glutamate: step 1/2. Catalyzes the transfer of a phosphate group to glutamate to form L-glutamate 5-phosphate. This Streptococcus uberis (strain ATCC BAA-854 / 0140J) protein is Glutamate 5-kinase.